Here is a 452-residue protein sequence, read N- to C-terminus: Pup--protein ligase (452 aa).

A Mg(2+)-binding site is contributed by E9. R53 is a binding site for ATP. Mg(2+) is bound at residue Y55. D57 functions as the Proton acceptor in the catalytic mechanism. Position 63 (E63) interacts with Mg(2+). The ATP site is built by T66 and W419.

This sequence belongs to the Pup ligase/Pup deamidase family. Pup-conjugating enzyme subfamily.

It catalyses the reaction ATP + [prokaryotic ubiquitin-like protein]-L-glutamate + [protein]-L-lysine = ADP + phosphate + N(6)-([prokaryotic ubiquitin-like protein]-gamma-L-glutamyl)-[protein]-L-lysine.. It participates in protein degradation; proteasomal Pup-dependent pathway. The protein operates within protein modification; protein pupylation. Its function is as follows. Catalyzes the covalent attachment of the prokaryotic ubiquitin-like protein modifier Pup to the proteasomal substrate proteins, thereby targeting them for proteasomal degradation. This tagging system is termed pupylation. The ligation reaction involves the side-chain carboxylate of the C-terminal glutamate of Pup and the side-chain amino group of a substrate lysine. In Thermobifida fusca (strain YX), this protein is Pup--protein ligase.